The primary structure comprises 557 residues: MSSVNLSSFIDMLRLGCNNIAKNYEYINQLNVFPVPDGDTGTNMKVTITEAIKKLENEKSHIKSFSELGKNFTRDLLLFSRGNSGVIFSQIMKGFFSNIIVNKTSNNSELSIEDVANAFIVAQEVAYKNVSKPVEGTMLTVARLISNEFKSQKNRPKTLEKLFEQAVKVAWQAVKKTPQMLPVLKASGVVDSGAYGFACFLEGMLSYYGGESNLDDNTLSTIEIKFNKFKEQHANEDEFGYCTEYVLRLGLKINQTVEKQKFHQKKFESKVNRIANSVVIASDKDNGFVKVHAHTLKPHLLLEMGLNYGEFEFVKIDNMNLQVNNKNNSPTKRVLKPAIVATVPTEAFAERIREDHDINAILCTDDTGAPSVFSLLEAVKLTNSSNVIFLLHDKNYFLSANETIKQLKHQKINADYVITANPVESIAALTVFNSDLSIHTNVKAMKRFIKEFASATITQASKSYKENKVMVNKNDFIAVTNKSIIASESQLTDCFFKTIDILSKKVKKPEFLLAYYGKDITEQDAKKMQALVEKKYKLFCEFSPGEQKVFSYIIGIQ.

The DhaL domain maps to 7 to 206 (SSFIDMLRLG…FACFLEGMLS (200 aa)).

This is an uncharacterized protein from Mycoplasma genitalium (strain ATCC 33530 / DSM 19775 / NCTC 10195 / G37) (Mycoplasmoides genitalium).